The chain runs to 123 residues: Small ribosomal subunit protein uS12 (123 aa).

The residue at position 89 (Asp-89) is a 3-methylthioaspartic acid.

It belongs to the universal ribosomal protein uS12 family. As to quaternary structure, part of the 30S ribosomal subunit. Contacts proteins S8 and S17. May interact with IF1 in the 30S initiation complex.

With S4 and S5 plays an important role in translational accuracy. Functionally, interacts with and stabilizes bases of the 16S rRNA that are involved in tRNA selection in the A site and with the mRNA backbone. Located at the interface of the 30S and 50S subunits, it traverses the body of the 30S subunit contacting proteins on the other side and probably holding the rRNA structure together. The combined cluster of proteins S8, S12 and S17 appears to hold together the shoulder and platform of the 30S subunit. The sequence is that of Small ribosomal subunit protein uS12 from Syntrophotalea carbinolica (strain DSM 2380 / NBRC 103641 / GraBd1) (Pelobacter carbinolicus).